Consider the following 388-residue polypeptide: Pectin acetylesterase 1 (388 aa).

The signal sequence occupies residues 1-24 (MKTLLYWGWSSLAGLILFSILAHG). 2 N-linked (GlcNAc...) asparagine glycosylation sites follow: Asn30 and Asn33. Active-site charge relay system residues include Ser187 and Asp283. N-linked (GlcNAc...) asparagine glycosylation is present at Asn304. His349 acts as the Charge relay system in catalysis.

The protein belongs to the pectinacetylesterase family.

It is found in the secreted. The protein resides in the cell wall. Its function is as follows. Hydrolyzes acetyl esters in homogalacturonan regions of pectin. In type I primary cell wall, galacturonic acid residues of pectin can be acetylated at the O-2 and O-3 positions. Decreasing the degree of acetylation of pectin gels in vitro alters their physical properties. The chain is Pectin acetylesterase 1 from Arabidopsis thaliana (Mouse-ear cress).